The chain runs to 397 residues: Riboflavin biosynthesis protein RibBA (397 aa).

A DHBP synthase region spans residues 1 to 199 (MFHRIEEALE…IEDLIAYRRH (199 aa)). Residues 26 to 27 (RE), Asp-31, 138 to 142 (RAGHT), and Glu-162 contribute to the D-ribulose 5-phosphate site. Glu-27 is a binding site for Mg(2+). His-141 contributes to the Mg(2+) binding site. Residues 200 to 397 (HETLVTREVE…ASKLGHLLNL (198 aa)) form a GTP cyclohydrolase II region. Residue 250-254 (RVHSE) participates in GTP binding. Positions 255, 266, and 268 each coordinate Zn(2+). Residues Gln-271, 293–295 (EGR), and Thr-315 each bind GTP. Asp-327 acts as the Proton acceptor; for GTP cyclohydrolase activity in catalysis. The Nucleophile; for GTP cyclohydrolase activity role is filled by Arg-329. Residues Thr-350 and Lys-355 each contribute to the GTP site.

It in the N-terminal section; belongs to the DHBP synthase family. In the C-terminal section; belongs to the GTP cyclohydrolase II family. Requires Mg(2+) as cofactor. It depends on Mn(2+) as a cofactor. The cofactor is Zn(2+).

It catalyses the reaction D-ribulose 5-phosphate = (2S)-2-hydroxy-3-oxobutyl phosphate + formate + H(+). The enzyme catalyses GTP + 4 H2O = 2,5-diamino-6-hydroxy-4-(5-phosphoribosylamino)-pyrimidine + formate + 2 phosphate + 3 H(+). It participates in cofactor biosynthesis; riboflavin biosynthesis; 2-hydroxy-3-oxobutyl phosphate from D-ribulose 5-phosphate: step 1/1. The protein operates within cofactor biosynthesis; riboflavin biosynthesis; 5-amino-6-(D-ribitylamino)uracil from GTP: step 1/4. Functionally, catalyzes the conversion of D-ribulose 5-phosphate to formate and 3,4-dihydroxy-2-butanone 4-phosphate. Its function is as follows. Catalyzes the conversion of GTP to 2,5-diamino-6-ribosylamino-4(3H)-pyrimidinone 5'-phosphate (DARP), formate and pyrophosphate. This Bacillus mycoides (strain KBAB4) (Bacillus weihenstephanensis) protein is Riboflavin biosynthesis protein RibBA.